The chain runs to 316 residues: MSGRSPKAPRAPSSTRVGGLVVAAHGRHYLVAPDDGGAMLQCFPRGKRSEVAVGDRVVYELASADQGVIVEIGERRNLLYRSDQYKSKLFAANLDQLLVVLATEPHFSEDLLGRALVAAEANELKPLIVLNKTDVTDALEGARKRLEPYRALGYTVVEVSIKMQPEAARAALIEHLQGHSTLLLGQSGMGKSTLVNLLIPDAEVATREISTALNSGRHTTTFTRLYPLPDSADGEGGALIDSPGFQEFGLHHLTEGRLERAFPEFRPLLPNCRFYNCHHLQEPGCAILEAVADGRIRRERHALYAQLVHEASQIVR.

The CP-type G domain occupies Asp83–Phe248. GTP is bound by residues Asn131 to Asp134 and Gly185 to Thr193. Positions 272, 277, 279, and 285 each coordinate Zn(2+).

It belongs to the TRAFAC class YlqF/YawG GTPase family. RsgA subfamily. In terms of assembly, monomer. Associates with 30S ribosomal subunit, binds 16S rRNA. Requires Zn(2+) as cofactor.

It is found in the cytoplasm. Its function is as follows. One of several proteins that assist in the late maturation steps of the functional core of the 30S ribosomal subunit. Helps release RbfA from mature subunits. May play a role in the assembly of ribosomal proteins into the subunit. Circularly permuted GTPase that catalyzes slow GTP hydrolysis, GTPase activity is stimulated by the 30S ribosomal subunit. This is Small ribosomal subunit biogenesis GTPase RsgA from Paraburkholderia phytofirmans (strain DSM 17436 / LMG 22146 / PsJN) (Burkholderia phytofirmans).